The primary structure comprises 331 residues: Ketol-acid reductoisomerase (NADP(+)) (331 aa).

Positions 2–182 constitute a KARI N-terminal Rossmann domain; the sequence is ARMYYDTDAN…GGTRAGILET (181 aa). Residues 25-28, Ser51, Ser53, and 83-86 each bind NADP(+); these read YGSQ and DEVQ. The active site involves His108. Residue Gly134 coordinates NADP(+). One can recognise a KARI C-terminal knotted domain in the interval 183–328; that stretch reads TFREETETDL…KDLRAMFSWL (146 aa). The Mg(2+) site is built by Asp191, Glu195, Glu227, and Glu231. Residue Ser252 participates in substrate binding.

It belongs to the ketol-acid reductoisomerase family. Mg(2+) is required as a cofactor.

The enzyme catalyses (2R)-2,3-dihydroxy-3-methylbutanoate + NADP(+) = (2S)-2-acetolactate + NADPH + H(+). It catalyses the reaction (2R,3R)-2,3-dihydroxy-3-methylpentanoate + NADP(+) = (S)-2-ethyl-2-hydroxy-3-oxobutanoate + NADPH + H(+). It functions in the pathway amino-acid biosynthesis; L-isoleucine biosynthesis; L-isoleucine from 2-oxobutanoate: step 2/4. The protein operates within amino-acid biosynthesis; L-valine biosynthesis; L-valine from pyruvate: step 2/4. Involved in the biosynthesis of branched-chain amino acids (BCAA). Catalyzes an alkyl-migration followed by a ketol-acid reduction of (S)-2-acetolactate (S2AL) to yield (R)-2,3-dihydroxy-isovalerate. In the isomerase reaction, S2AL is rearranged via a Mg-dependent methyl migration to produce 3-hydroxy-3-methyl-2-ketobutyrate (HMKB). In the reductase reaction, this 2-ketoacid undergoes a metal-dependent reduction by NADPH to yield (R)-2,3-dihydroxy-isovalerate. This Rippkaea orientalis (strain PCC 8801 / RF-1) (Cyanothece sp. (strain PCC 8801)) protein is Ketol-acid reductoisomerase (NADP(+)).